An 843-amino-acid chain; its full sequence is Glycogen phosphorylase, brain form (843 aa).

Alanine 2 carries the N-acetylalanine modification. At serine 15 the chain carries Phosphoserine; by PHK; in form phosphorylase A. 3 residues coordinate AMP: aspartate 43, tyrosine 197, and arginine 310. Tyrosine 197 is subject to Phosphotyrosine. Phosphotyrosine is present on tyrosine 473. Residue lysine 569 participates in pyridoxal 5'-phosphate binding. The pyridoxal 5'-phosphate stretch occupies residues 677-678; it reads TG. Lysine 681 bears the N6-(pyridoxal phosphate)lysine mark.

This sequence belongs to the glycogen phosphorylase family. In terms of assembly, homodimer. Dimers associate into a tetramer to form the enzymatically active phosphorylase A. The cofactor is pyridoxal 5'-phosphate. Post-translationally, phosphorylation of Ser-15 converts phosphorylase B (unphosphorylated) to phosphorylase A.

It catalyses the reaction [(1-&gt;4)-alpha-D-glucosyl](n) + phosphate = [(1-&gt;4)-alpha-D-glucosyl](n-1) + alpha-D-glucose 1-phosphate. Its activity is regulated as follows. Activity of phosphorylase is controlled both by allosteric means (through the non-covalent binding of metabolites) and by covalent modification. Thus AMP allosterically activates, whereas ATP, ADP, and glucose-6-phosphate allosterically inhibit, phosphorylase B. In terms of biological role, glycogen phosphorylase that regulates glycogen mobilization. Phosphorylase is an important allosteric enzyme in carbohydrate metabolism. Enzymes from different sources differ in their regulatory mechanisms and in their natural substrates. However, all known phosphorylases share catalytic and structural properties. In Bos taurus (Bovine), this protein is Glycogen phosphorylase, brain form (PYGB).